We begin with the raw amino-acid sequence, 233 residues long: 2,3,4,5-tetrahydropyridine-2,6-dicarboxylate N-acetyltransferase (233 aa).

The protein belongs to the transferase hexapeptide repeat family. DapH subfamily.

It carries out the reaction (S)-2,3,4,5-tetrahydrodipicolinate + acetyl-CoA + H2O = L-2-acetamido-6-oxoheptanedioate + CoA. It functions in the pathway amino-acid biosynthesis; L-lysine biosynthesis via DAP pathway; LL-2,6-diaminopimelate from (S)-tetrahydrodipicolinate (acetylase route): step 1/3. In terms of biological role, catalyzes the transfer of an acetyl group from acetyl-CoA to tetrahydrodipicolinate. This is 2,3,4,5-tetrahydropyridine-2,6-dicarboxylate N-acetyltransferase from Thermosipho africanus (strain TCF52B).